The primary structure comprises 406 residues: LIM/homeobox protein Lhx1 (406 aa).

LIM zinc-binding domains lie at Cys-4 to Asp-54 and Cys-63 to Asp-117. Disordered regions lie at residues Asn-128–Ala-189 and Tyr-293–Gly-374. Residues Ser-137–Pro-148 are compositionally biased toward low complexity. Basic and acidic residues predominate over residues Asp-151 to Gly-167. Position 162 is a phosphoserine (Ser-162). The segment at residues Arg-180–Lys-239 is a DNA-binding region (homeobox). Over residues Pro-315–Leu-327 the composition is skewed to low complexity. Positions Gly-352–Pro-362 are enriched in pro residues.

As to quaternary structure, interacts with LDB1 via the tandem LIM domains.

It is found in the nucleus. In terms of biological role, potential transcription factor. May play a role in early mesoderm formation and later in lateral mesoderm differentiation and neurogenesis. The sequence is that of LIM/homeobox protein Lhx1 (LHX1) from Saimiri boliviensis boliviensis (Bolivian squirrel monkey).